The following is a 98-amino-acid chain: uncharacterized protein (98 aa).

Residues 10–30 form a helical membrane-spanning segment; it reads LYGFFAVTGVLIASFIIGEIV.

The protein localises to the host membrane. This is an uncharacterized protein from Saccharolobus islandicus (Sulfolobus islandicus).